A 281-amino-acid polypeptide reads, in one-letter code: Auxin-responsive protein IAA19 (281 aa).

The EAR-like (transcriptional repression) signature appears at 40-44 (LRLGL). Residues 66-126 (LGPAPPPRGG…AAGAPRAAKA (61 aa)) are disordered. A compositionally biased stretch (basic and acidic residues) spans 79–91 (GFVDSLDRSEGRR). Residues 114–126 (GEAAAGAPRAAKA) are compositionally biased toward low complexity. Residues 161 to 265 (CCYVKVSMDG…RKLRIMRGSD (105 aa)) enclose the PB1 domain.

It belongs to the Aux/IAA family. In terms of assembly, homodimers and heterodimers. In terms of tissue distribution, expressed in etiolated seedlings and flowers.

The protein localises to the nucleus. In terms of biological role, aux/IAA proteins are short-lived transcriptional factors that function as repressors of early auxin response genes at low auxin concentrations. This is Auxin-responsive protein IAA19 (IAA19) from Oryza sativa subsp. japonica (Rice).